A 632-amino-acid polypeptide reads, in one-letter code: 1,4-alpha-glucan branching enzyme GlgB (632 aa).

D310 functions as the Nucleophile in the catalytic mechanism. The active-site Proton donor is E363.

This sequence belongs to the glycosyl hydrolase 13 family. GlgB subfamily. Monomer.

It carries out the reaction Transfers a segment of a (1-&gt;4)-alpha-D-glucan chain to a primary hydroxy group in a similar glucan chain.. It functions in the pathway glycan biosynthesis; glycogen biosynthesis. Its function is as follows. Catalyzes the formation of the alpha-1,6-glucosidic linkages in glycogen by scission of a 1,4-alpha-linked oligosaccharide from growing alpha-1,4-glucan chains and the subsequent attachment of the oligosaccharide to the alpha-1,6 position. This chain is 1,4-alpha-glucan branching enzyme GlgB, found in Desulfitobacterium hafniense (strain Y51).